A 409-amino-acid polypeptide reads, in one-letter code: Ribose-phosphate pyrophosphokinase 1 (409 aa).

3 residues coordinate Mg(2+): Asp-128, His-130, and Asp-143. The residue at position 199 (Ser-199) is a Phosphoserine.

This sequence belongs to the ribose-phosphate pyrophosphokinase family.

It localises to the cytoplasm. The enzyme catalyses D-ribose 5-phosphate + ATP = 5-phospho-alpha-D-ribose 1-diphosphate + AMP + H(+). Its pathway is metabolic intermediate biosynthesis; 5-phospho-alpha-D-ribose 1-diphosphate biosynthesis; 5-phospho-alpha-D-ribose 1-diphosphate from D-ribose 5-phosphate (route I): step 1/1. Functionally, 5-phosphoribose 1-diphosphate synthase involved in nucleotide, histidine, and tryptophan biosynthesis. Active in heteromultimeric complexes with other 5-phosphoribose 1-diphosphate synthases. The polypeptide is Ribose-phosphate pyrophosphokinase 1 (Schizosaccharomyces pombe (strain 972 / ATCC 24843) (Fission yeast)).